The sequence spans 400 residues: Cytochrome b (400 aa).

A helical membrane pass occupies residues 47-67 (LGSIAGIALVIQIITGVILAM). Heme b contacts are provided by H97 and H111. The next 8 membrane-spanning stretches (helical) occupy residues 98 to 118 (AVGA…GLYY), 131 to 151 (IGII…VLPW), 166 to 186 (FSAI…GFSV), 194 to 214 (FFSL…LHLV), 247 to 267 (FVGF…EPNY), 306 to 326 (LGGV…PWLD), 341 to 361 (IAFW…GQPA), and 368 to 388 (ISRF…PLIG). Heme b-binding residues include H198 and H212.

This sequence belongs to the cytochrome b family. The main subunits of complex b-c1 are: cytochrome b, cytochrome c1 and the Rieske protein. The cofactor is heme b.

The protein resides in the cell membrane. Functionally, component of the ubiquinol-cytochrome c reductase complex (complex III or cytochrome b-c1 complex), which is a respiratory chain that generates an electrochemical potential coupled to ATP synthesis. The chain is Cytochrome b (petB) from Rickettsia bellii (strain RML369-C).